The sequence spans 816 residues: Lon protease (816 aa).

A Lon N-terminal domain is found at 27–221; sequence LPLLPIRDVV…KVNDLLAREH (195 aa). Residue 372–379 participates in ATP binding; that stretch reads GPPGVGKT. Positions 608–789 constitute a Lon proteolytic domain; it reads KNEVGVVNGL…DEVLKLALEK (182 aa). Residues serine 695 and lysine 738 contribute to the active site. The disordered stretch occupies residues 795–816; sequence PKGKAKPATPKVVVRPSKEISA. Residues 800-809 are compositionally biased toward low complexity; the sequence is KPATPKVVVR.

This sequence belongs to the peptidase S16 family. Homohexamer. Organized in a ring with a central cavity.

The protein localises to the cytoplasm. The enzyme catalyses Hydrolysis of proteins in presence of ATP.. In terms of biological role, ATP-dependent serine protease that mediates the selective degradation of mutant and abnormal proteins as well as certain short-lived regulatory proteins. Required for cellular homeostasis and for survival from DNA damage and developmental changes induced by stress. Degrades polypeptides processively to yield small peptide fragments that are 5 to 10 amino acids long. Binds to DNA in a double-stranded, site-specific manner. The polypeptide is Lon protease (Trichlorobacter lovleyi (strain ATCC BAA-1151 / DSM 17278 / SZ) (Geobacter lovleyi)).